Consider the following 314-residue polypeptide: tRNA pseudouridine synthase B (314 aa).

The active-site Nucleophile is D54.

Belongs to the pseudouridine synthase TruB family. Type 1 subfamily.

It catalyses the reaction uridine(55) in tRNA = pseudouridine(55) in tRNA. Responsible for synthesis of pseudouridine from uracil-55 in the psi GC loop of transfer RNAs. This chain is tRNA pseudouridine synthase B, found in Ralstonia nicotianae (strain ATCC BAA-1114 / GMI1000) (Ralstonia solanacearum).